The following is a 37-amino-acid chain: Large ribosomal subunit protein bL36 (37 aa).

It belongs to the bacterial ribosomal protein bL36 family.

This is Large ribosomal subunit protein bL36 from Mycobacterium leprae (strain Br4923).